Reading from the N-terminus, the 319-residue chain is 2-dehydropantoate 2-reductase (319 aa).

Residues 10–15 (GTGALG) and Asn105 contribute to the NADP(+) site. A substrate-binding site is contributed by Asn105. Catalysis depends on Lys192, which acts as the Proton donor. Substrate-binding residues include Asn196, Asn200, and Ser262. Glu274 provides a ligand contact to NADP(+).

The protein belongs to the ketopantoate reductase family.

The protein localises to the cytoplasm. It carries out the reaction (R)-pantoate + NADP(+) = 2-dehydropantoate + NADPH + H(+). It participates in cofactor biosynthesis; (R)-pantothenate biosynthesis; (R)-pantoate from 3-methyl-2-oxobutanoate: step 2/2. In terms of biological role, catalyzes the NADPH-dependent reduction of ketopantoate into pantoic acid. This chain is 2-dehydropantoate 2-reductase, found in Nostoc sp. (strain PCC 7120 / SAG 25.82 / UTEX 2576).